The following is a 220-amino-acid chain: Fructose-6-phosphate aldolase 2 (220 aa).

The active-site Schiff-base intermediate with substrate is the K85.

The protein belongs to the transaldolase family. Type 3A subfamily. In terms of assembly, homodecamer.

Its subcellular location is the cytoplasm. The enzyme catalyses beta-D-fructose 6-phosphate = dihydroxyacetone + D-glyceraldehyde 3-phosphate. Its function is as follows. Catalyzes the reversible formation of fructose 6-phosphate from dihydroxyacetone and D-glyceraldehyde 3-phosphate via an aldolization reaction. Can utilize hydroxyacetone as an alternative donor substrate. Is also able to catalyze the direct self-aldol addition of glycolaldehyde. Is less catalytically efficient than the isozyme FsaA. Does not display transaldolase activity. The protein is Fructose-6-phosphate aldolase 2 (fsaB) of Escherichia coli (strain K12).